Reading from the N-terminus, the 298-residue chain is Inosose dehydratase (298 aa).

The protein belongs to the IolE/MocC family. Requires glutathione as cofactor. Co(2+) is required as a cofactor. It depends on Mn(2+) as a cofactor.

The enzyme catalyses scyllo-inosose = 3D-3,5/4-trihydroxycyclohexane-1,2-dione + H2O. It participates in polyol metabolism; myo-inositol degradation into acetyl-CoA; acetyl-CoA from myo-inositol: step 2/7. Its function is as follows. Catalyzes the dehydration of inosose (2-keto-myo-inositol, 2KMI or 2,4,6/3,5-pentahydroxycyclohexanone) to 3D-(3,5/4)-trihydroxycyclohexane-1,2-dione (D-2,3-diketo-4-deoxy-epi-inositol). This Geobacillus thermodenitrificans (strain NG80-2) protein is Inosose dehydratase.